Here is a 708-residue protein sequence, read N- to C-terminus: Kin of IRRE-like protein 2 (708 aa).

The N-terminal stretch at 1–20 (MLRMRVPALLVLLFCFRGRA) is a signal peptide. The Extracellular portion of the chain corresponds to 21–510 (GPSPHFLQQP…GRRDLLPTVR (490 aa)). 5 consecutive Ig-like C2-type domains span residues 24 to 118 (PHFL…AQLH), 123 to 222 (PEAP…ITLS), 227 to 307 (PEVT…TALD), 312 to 394 (PILQ…ARLT), and 398 to 501 (PPVV…ASLG). The cysteines at positions 45 and 103 are disulfide-linked. Asparagine 143 carries N-linked (GlcNAc...) asparagine glycosylation. 2 disulfide bridges follow: cysteine 146–cysteine 204 and cysteine 248–cysteine 291. A Cell attachment site motif is present at residues 149-151 (RGD). Residue asparagine 301 is glycosylated (N-linked (GlcNAc...) asparagine). 2 disulfides stabilise this stretch: cysteine 333/cysteine 375 and cysteine 419/cysteine 485. Residue asparagine 484 is glycosylated (N-linked (GlcNAc...) asparagine). A helical membrane pass occupies residues 511–531 (IVAGVAAATTTLLMVITGVAL). Over 532 to 708 (CCWRHSKASA…PSHPRLQTHV (177 aa)) the chain is Cytoplasmic. Positions 545 to 601 (EQKNLMRIPGSSDGSSSRGPEEEETGSREDRGPIVHTDHSDLVLEEEGTLETKDPTN) are disordered. Low complexity predominate over residues 553 to 562 (PGSSDGSSSR). Positions 569–586 (TGSREDRGPIVHTDHSDL) are enriched in basic and acidic residues. Serine 571 carries the post-translational modification Phosphoserine. A phosphotyrosine mark is found at tyrosine 603, tyrosine 604, and tyrosine 661. Residues 684–708 (LAPGTPPFPYAAFPTPSHPRLQTHV) are disordered.

It belongs to the immunoglobulin superfamily. Homodimer. Interacts with NPHS2/podocin (via the C-terminus). Interacts with NPHS1 (via the Ig-like domains). Interacts with FYN. N-glycosylated. Post-translationally, the extracellular domain is cleaved leading to the generation of a soluble fragment and a membrane-bound C-terminal fragment, which is further cleaved by gamma-secretase. Highly expressed in beta-cells of the pancreatic islets.

It is found in the cell membrane. Functionally, may regulate basal insulin secretion. This Homo sapiens (Human) protein is Kin of IRRE-like protein 2 (KIRREL2).